Consider the following 173-residue polypeptide: MIITIGGLAGTGTSTTAKTLSQEINIPFISAGDVFRQMAVENNMTLLEFSEFAEGNDNIDKALDKRQAEIANNSENLIVEGRISAFFVNADYRIWLKAPDNVRAERISYREDKSLDTVKQEIAERTASERKRYMEIHDIDIDNLDIYDLIINTDTFNIESTVNIIKKCIENKK.

Residue 7–15 (GLAGTGTST) participates in ATP binding.

Belongs to the cytidylate kinase family. Type 2 subfamily.

It localises to the cytoplasm. It catalyses the reaction CMP + ATP = CDP + ADP. It carries out the reaction dCMP + ATP = dCDP + ADP. The polypeptide is Cytidylate kinase (Methanosphaera stadtmanae (strain ATCC 43021 / DSM 3091 / JCM 11832 / MCB-3)).